A 416-amino-acid chain; its full sequence is Enterobactin exporter EntS (416 aa).

Residues 1–21 lie on the Cytoplasmic side of the membrane; that stretch reads MNKQSWLLNLSLLKTHPAFRA. The helical transmembrane segment at 22–42 threads the bilayer; it reads VFLARFISIVSLGLLGVAVPV. At 43-55 the chain is on the periplasmic side; the sequence is QIQMMTHSTWQVG. A helical membrane pass occupies residues 56 to 76; the sequence is LSVTLTGGAMFVGLMVGGVLA. Residues 77-83 lie on the Cytoplasmic side of the membrane; it reads DRYERKK. The chain crosses the membrane as a helical span at residues 84–104; it reads VILLARGTCGIGFIGLCLNAL. Residues 105-109 lie on the Periplasmic side of the membrane; it reads LPEPS. A helical transmembrane segment spans residues 110–130; sequence LLAIYLLGLWDGFFASLGVTA. At 131–156 the chain is on the cytoplasmic side; that stretch reads LLAATPALVGRENLMQAGAITMLTVR. The helical transmembrane segment at 157–177 threads the bilayer; sequence LGSVISPMIGGLLLATGGVAW. Asparagine 178 is a topological domain (periplasmic). Residues 179-199 form a helical membrane-spanning segment; the sequence is YGLAAAGTFITLLPLLSLPAL. Residues 200–218 lie on the Cytoplasmic side of the membrane; sequence PPPPQPREHPLKSLLAGFR. A helical membrane pass occupies residues 219 to 239; it reads FLLASPLVGGIALLGGLLTMA. Residues 240–256 lie on the Periplasmic side of the membrane; it reads SAVRVLYPALADNWQMS. Residues 257 to 277 traverse the membrane as a helical segment; it reads AAQIGFLYAAIPLGAAIGALT. The Cytoplasmic segment spans residues 278 to 287; the sequence is SGKLAHSARP. A helical membrane pass occupies residues 288–307; sequence GLLMLLSTLGSFLAIGLFGL. Residues 308–313 are Periplasmic-facing; that stretch reads MPMWIL. A helical transmembrane segment spans residues 314–336; it reads GVICLALFGWLSAVSSLLQYTML. Residues 337 to 356 are Cytoplasmic-facing; sequence QTQTPEAMLGRINGLWTAQN. The chain crosses the membrane as a helical span at residues 357–377; that stretch reads VTGDAIGAALLGGLGAMMTPV. Residue alanine 378 is a topological domain, periplasmic. A helical membrane pass occupies residues 379–399; sequence SASASGFGLLIIGVLLLLVLV. Topologically, residues 400-416 are cytoplasmic; that stretch reads ELRRFRQTPPQVTASDS.

Belongs to the major facilitator superfamily. EntS (TC 2.A.1.38) family.

It localises to the cell inner membrane. Functionally, component of an export pathway for enterobactin. The chain is Enterobactin exporter EntS from Escherichia coli O81 (strain ED1a).